A 446-amino-acid polypeptide reads, in one-letter code: Na(+)-translocating NADH-quinone reductase subunit A (446 aa).

Belongs to the NqrA family. In terms of assembly, composed of six subunits; NqrA, NqrB, NqrC, NqrD, NqrE and NqrF.

It carries out the reaction a ubiquinone + n Na(+)(in) + NADH + H(+) = a ubiquinol + n Na(+)(out) + NAD(+). Functionally, NQR complex catalyzes the reduction of ubiquinone-1 to ubiquinol by two successive reactions, coupled with the transport of Na(+) ions from the cytoplasm to the periplasm. NqrA to NqrE are probably involved in the second step, the conversion of ubisemiquinone to ubiquinol. This Vibrio campbellii (strain ATCC BAA-1116) protein is Na(+)-translocating NADH-quinone reductase subunit A.